The chain runs to 357 residues: Aminotransferase TOXF (357 aa).

Arg-87 contacts pyridoxal 5'-phosphate. Lys-188 bears the N6-(pyridoxal phosphate)lysine mark. Residue Glu-227 participates in pyridoxal 5'-phosphate binding.

It belongs to the class-IV pyridoxal-phosphate-dependent aminotransferase family. Pyridoxal 5'-phosphate is required as a cofactor.

The protein operates within mycotoxin biosynthesis; HC-toxin biosynthesis. Aminotransferase, part of the diffuse TOX2 gene cluster that mediates the biosynthesis of the HC-toxin, cyclic tetrapeptide of structure cyclo(D-Pro-L-Ala-D-Ala-L-Aeo), where Aeo stands for 2-amino-9,10-epoxi-8-oxodecanoic acid. HC-toxin is a determinant of specificity and virulence in the interaction between the producing fungus and its host, maize. TOXF contributes to the synthesis of 2-amino-9,10-epoxi-8-oxodecanoic acid, an essential precursor for the production of the major forms of HC-toxin by the non-ribosomal peptide synthetase HTS1. The sequence is that of Aminotransferase TOXF (TOXF) from Cochliobolus carbonum (Maize leaf spot fungus).